A 276-amino-acid chain; its full sequence is MELKAFIEITRPHNCILAGIVGLLGSIVALGHFPDPKTALLIFLVVTVGCAGGNTINDYFDYEIDKINRPERPLPRGAMGRKVALYYSMLLFAVGLALAYMINIYAFILGVIAYVTMFIYAWKLKPLPFVGNIVVAGLTGATPLYGAVAVEHLGLAGYLAICAFLVNVAREVIKDIEDVEGDMAKGAKTLPIIWGKKRAAYVGVLFALLTVIASFLPVKASVGVGYYAMVPVDLLILYAAYLILRNQDREVAHKSQKLLKMSIFLAVMAFLIAAIV.

Helical transmembrane passes span 14–34 (NCILAGIVGLLGSIVALGHFP), 40–60 (LLIFLVVTVGCAGGNTINDYF), 92–112 (FAVGLALAYMINIYAFILGVI), 146–166 (GAVAVEHLGLAGYLAICAFLV), 202–222 (VGVLFALLTVIASFLPVKASV), 224–244 (VGYYAMVPVDLLILYAAYLIL), and 256–276 (QKLLKMSIFLAVMAFLIAAIV).

The protein belongs to the UbiA prenyltransferase family. DGGGP synthase subfamily. It depends on Mg(2+) as a cofactor.

The protein localises to the cell membrane. It catalyses the reaction sn-3-O-(geranylgeranyl)glycerol 1-phosphate + (2E,6E,10E)-geranylgeranyl diphosphate = 2,3-bis-O-(geranylgeranyl)-sn-glycerol 1-phosphate + diphosphate. The protein operates within membrane lipid metabolism; glycerophospholipid metabolism. Functionally, prenyltransferase that catalyzes the transfer of the geranylgeranyl moiety of geranylgeranyl diphosphate (GGPP) to the C2 hydroxyl of (S)-3-O-geranylgeranylglyceryl phosphate (GGGP). This reaction is the second ether-bond-formation step in the biosynthesis of archaeal membrane lipids. This Thermococcus onnurineus (strain NA1) protein is Digeranylgeranylglyceryl phosphate synthase.